The sequence spans 111 residues: Movement protein TGB2 (111 aa).

Residues 1-16 are Cytoplasmic-facing; it reads MSSHQNFLTPPPDHSK. Residues 17–37 form a helical membrane-spanning segment; it reads AILAVAVGVGLAIVLHFSLSY. The Lumenal portion of the chain corresponds to 38–72; it reads KLPSPGDNIHSLPFGGTYRDGTKSIIYNSPHRGPG. The helical transmembrane segment at 73-93 threads the bilayer; sequence QSGALPIITVFAIIECTLHVL. Residues 94 to 111 are Cytoplasmic-facing; the sequence is RKRDNPVRPQHSDCPNCS.

The protein belongs to the Tymovirales TGBp2 protein family.

Its subcellular location is the host endoplasmic reticulum membrane. Functionally, plays a role in viral cell-to-cell propagation, by facilitating genome transport to neighboring plant cells through plasmosdesmata,. This is Movement protein TGB2 from Carica papaya (Papaya).